Here is a 110-residue protein sequence, read N- to C-terminus: Small ribosomal subunit protein bS16 (110 aa).

Residues 81–104 (VRPAEVLGKQKQEKERSAKKKDAT) show a composition bias toward basic and acidic residues. Positions 81–110 (VRPAEVLGKQKQEKERSAKKKDATASETSE) are disordered.

This sequence belongs to the bacterial ribosomal protein bS16 family.

The sequence is that of Small ribosomal subunit protein bS16 from Prochlorococcus marinus (strain NATL1A).